A 362-amino-acid polypeptide reads, in one-letter code: tRNA-specific 2-thiouridylase MnmA 3 (362 aa).

ATP-binding positions include Gly-11–Ser-18 and Met-37. Cys-91 functions as the Nucleophile in the catalytic mechanism. The cysteines at positions 91 and 188 are disulfide-linked. Gly-115 provides a ligand contact to ATP. Positions Lys-137–Gln-139 are interaction with tRNA. Cys-188 functions as the Cysteine persulfide intermediate in the catalytic mechanism. The tract at residues Arg-296–Tyr-297 is interaction with tRNA.

This sequence belongs to the MnmA/TRMU family.

The protein resides in the cytoplasm. It catalyses the reaction S-sulfanyl-L-cysteinyl-[protein] + uridine(34) in tRNA + AH2 + ATP = 2-thiouridine(34) in tRNA + L-cysteinyl-[protein] + A + AMP + diphosphate + H(+). In terms of biological role, catalyzes the 2-thiolation of uridine at the wobble position (U34) of tRNA, leading to the formation of s(2)U34. The polypeptide is tRNA-specific 2-thiouridylase MnmA 3 (Bacteroides fragilis (strain YCH46)).